The following is a 671-amino-acid chain: Probable serine/threonine-protein kinase DDB_G0286627 (671 aa).

Residues 31–283 (WVIERQLSKG…SHQLIKHPFF (253 aa)) form the Protein kinase domain. ATP is bound by residues 37 to 45 (LSKGSFGQV) and Lys61. Asp148 (proton acceptor) is an active-site residue. A helical transmembrane segment spans residues 369-389 (FKIIYLFLILLFLMTILVNLN). The segment at 410–523 (PESNPIKKPS…PPVTETPKPT (114 aa)) is disordered. The segment covering 427-490 (NQYSEGSQSS…PTDSSTTDPP (64 aa)) has biased composition (low complexity). Residues 491-513 (VTDPPITDPPITDPPVTDPPITE) show a composition bias toward pro residues.

It belongs to the protein kinase superfamily. STE Ser/Thr protein kinase family. Mg(2+) is required as a cofactor.

Its subcellular location is the membrane. It catalyses the reaction L-seryl-[protein] + ATP = O-phospho-L-seryl-[protein] + ADP + H(+). The catalysed reaction is L-threonyl-[protein] + ATP = O-phospho-L-threonyl-[protein] + ADP + H(+). This Dictyostelium discoideum (Social amoeba) protein is Probable serine/threonine-protein kinase DDB_G0286627.